The sequence spans 101 residues: Small ribosomal subunit protein uS14 (101 aa).

This sequence belongs to the universal ribosomal protein uS14 family. As to quaternary structure, part of the 30S ribosomal subunit. Contacts proteins S3 and S10.

In terms of biological role, binds 16S rRNA, required for the assembly of 30S particles and may also be responsible for determining the conformation of the 16S rRNA at the A site. This Cronobacter sakazakii (strain ATCC BAA-894) (Enterobacter sakazakii) protein is Small ribosomal subunit protein uS14.